A 109-amino-acid polypeptide reads, in one-letter code: ATPase inhibitor, mitochondrial (109 aa).

A mitochondrion-targeting transit peptide spans 1–25 (MAATALAARTRQAVWSVWAMQGRGF). Residues 26–52 (GSESGDNVRSSAGAVRDAGGAFGKREQ) are disordered. Positions 26-52 (GSESGDNVRSSAGAVRDAGGAFGKREQ) are N-terminal inhibitory region. Residues 69-109 (ALKKHHENEISHHAKEIERLQKEIERHKQSIKKLKQSEDDD) are a coiled coil. The antiparallel alpha-helical coiled coil region stretch occupies residues 74–106 (HENEISHHAKEIERLQKEIERHKQSIKKLKQSE). An N6-succinyllysine modification is found at Lys-103.

Belongs to the ATPase inhibitor family. Homodimer; represents the active form and is present at a pH value below 6.5. Homotetramer; represents the inactive form and is present at a pH value above 7.0.

It localises to the mitochondrion. Its function is as follows. Endogenous F(1)F(o)-ATPase inhibitor limiting ATP depletion when the mitochondrial membrane potential falls below a threshold and the F(1)F(o)-ATP synthase starts hydrolyzing ATP to pump protons out of the mitochondrial matrix. Required to avoid the consumption of cellular ATP when the F(1)F(o)-ATP synthase enzyme acts as an ATP hydrolase. Indirectly acts as a regulator of heme synthesis in erythroid tissues: regulates heme synthesis by modulating the mitochondrial pH and redox potential, allowing FECH to efficiently catalyze the incorporation of iron into protoporphyrin IX to produce heme. The polypeptide is ATPase inhibitor, mitochondrial (Bos taurus (Bovine)).